Here is a 415-residue protein sequence, read N- to C-terminus: Gamma-glutamyl phosphate reductase (415 aa).

Belongs to the gamma-glutamyl phosphate reductase family.

The protein resides in the cytoplasm. The catalysed reaction is L-glutamate 5-semialdehyde + phosphate + NADP(+) = L-glutamyl 5-phosphate + NADPH + H(+). The protein operates within amino-acid biosynthesis; L-proline biosynthesis; L-glutamate 5-semialdehyde from L-glutamate: step 2/2. Functionally, catalyzes the NADPH-dependent reduction of L-glutamate 5-phosphate into L-glutamate 5-semialdehyde and phosphate. The product spontaneously undergoes cyclization to form 1-pyrroline-5-carboxylate. This Bacillus cereus (strain 03BB102) protein is Gamma-glutamyl phosphate reductase.